We begin with the raw amino-acid sequence, 323 residues long: MIDFGNFYSLIAKNHLSHWLETLPAQIANWQREQQHGLFKQWSNTVEFLPEIKPYRLDLLHSVTAESEEPLSTGQIKRIETLMRNLMPWRKGPFSLYGVNIDTEWRSDWKWDRVLPHLSDLTGRTILDVGCGSGYHMWRMIGAGAHLAVGIDPTQLFLCQFEAVRKLLGNDQRAHLLPLGIEQLPALKAFDTVFSMGVLYHRRSPLEHLWQLKDQLVNEGELVLETLVIDGDENTVLVPGDRYAQMRNVYFIPSALALKNWLKKCGFVDIRIVDVCVTTTEEQRRTEWMVTESLSDFLDPHDPSKTVEGYPAPKRAVLIARKP.

Carboxy-S-adenosyl-L-methionine is bound by residues Lys-91, Trp-105, Lys-110, Gly-130, 152–154, 181–182, Met-196, Tyr-200, and Arg-315; these read DPT and IE.

It belongs to the class I-like SAM-binding methyltransferase superfamily. CmoB family. Homotetramer.

It catalyses the reaction carboxy-S-adenosyl-L-methionine + 5-hydroxyuridine(34) in tRNA = 5-carboxymethoxyuridine(34) in tRNA + S-adenosyl-L-homocysteine + H(+). Functionally, catalyzes carboxymethyl transfer from carboxy-S-adenosyl-L-methionine (Cx-SAM) to 5-hydroxyuridine (ho5U) to form 5-carboxymethoxyuridine (cmo5U) at position 34 in tRNAs. The protein is tRNA U34 carboxymethyltransferase of Shigella flexneri serotype 5b (strain 8401).